The following is a 363-amino-acid chain: NAD(P)H-quinone oxidoreductase subunit 1, chloroplastic (363 aa).

Helical transmembrane passes span 28–48, 98–118, 129–149, 253–273, 274–294, 300–320, and 336–356; these read WVLA…LVIV, FSIG…VIPF, IGIF…LMSG, FGLF…FVTV, LYLG…LVEI, IFGT…FLFI, and LLNL…LLTT.

It belongs to the complex I subunit 1 family. NDH is composed of at least 16 different subunits, 5 of which are encoded in the nucleus.

The protein localises to the plastid. It localises to the chloroplast thylakoid membrane. The enzyme catalyses a plastoquinone + NADH + (n+1) H(+)(in) = a plastoquinol + NAD(+) + n H(+)(out). The catalysed reaction is a plastoquinone + NADPH + (n+1) H(+)(in) = a plastoquinol + NADP(+) + n H(+)(out). Functionally, NDH shuttles electrons from NAD(P)H:plastoquinone, via FMN and iron-sulfur (Fe-S) centers, to quinones in the photosynthetic chain and possibly in a chloroplast respiratory chain. The immediate electron acceptor for the enzyme in this species is believed to be plastoquinone. Couples the redox reaction to proton translocation, and thus conserves the redox energy in a proton gradient. The chain is NAD(P)H-quinone oxidoreductase subunit 1, chloroplastic from Citrus sinensis (Sweet orange).